The primary structure comprises 432 residues: Anaerobic glycerol-3-phosphate dehydrogenase subunit B (432 aa).

It belongs to the anaerobic G-3-P dehydrogenase subunit B family. Composed of a catalytic GlpA/B dimer and of membrane bound GlpC. FMN is required as a cofactor.

The catalysed reaction is a quinone + sn-glycerol 3-phosphate = dihydroxyacetone phosphate + a quinol. It functions in the pathway polyol metabolism; glycerol degradation via glycerol kinase pathway; glycerone phosphate from sn-glycerol 3-phosphate (anaerobic route): step 1/1. In terms of biological role, conversion of glycerol 3-phosphate to dihydroxyacetone. Uses fumarate or nitrate as electron acceptor. The polypeptide is Anaerobic glycerol-3-phosphate dehydrogenase subunit B (Histophilus somni (strain 129Pt) (Haemophilus somnus)).